The primary structure comprises 208 residues: FMN-dependent NADH:quinone oxidoreductase 1 (208 aa).

17–19 lines the FMN pocket; it reads SVS.

It belongs to the azoreductase type 1 family. In terms of assembly, homodimer. It depends on FMN as a cofactor.

It carries out the reaction 2 a quinone + NADH + H(+) = 2 a 1,4-benzosemiquinone + NAD(+). It catalyses the reaction N,N-dimethyl-1,4-phenylenediamine + anthranilate + 2 NAD(+) = 2-(4-dimethylaminophenyl)diazenylbenzoate + 2 NADH + 2 H(+). Quinone reductase that provides resistance to thiol-specific stress caused by electrophilic quinones. Its function is as follows. Also exhibits azoreductase activity. Catalyzes the reductive cleavage of the azo bond in aromatic azo compounds to the corresponding amines. The sequence is that of FMN-dependent NADH:quinone oxidoreductase 1 from Listeria monocytogenes serovar 1/2a (strain ATCC BAA-679 / EGD-e).